We begin with the raw amino-acid sequence, 712 residues long: Polyribonucleotide nucleotidyltransferase (712 aa).

Aspartate 487 and aspartate 493 together coordinate Mg(2+). In terms of domain architecture, KH spans 554–613; sequence PRIEVMNIPVDKIREVIGSGGKVIREIVEKTGAKINIEDDGTVKIASSSGKEIEAARKWI. Positions 623–691 constitute an S1 motif domain; it reads GQIYEGTVVK…ERGKVRLSMK (69 aa).

The protein belongs to the polyribonucleotide nucleotidyltransferase family. Mg(2+) is required as a cofactor.

It localises to the cytoplasm. It catalyses the reaction RNA(n+1) + phosphate = RNA(n) + a ribonucleoside 5'-diphosphate. Functionally, involved in mRNA degradation. Catalyzes the phosphorolysis of single-stranded polyribonucleotides processively in the 3'- to 5'-direction. This chain is Polyribonucleotide nucleotidyltransferase, found in Rhizobium etli (strain CIAT 652).